A 328-amino-acid polypeptide reads, in one-letter code: Malate dehydrogenase (328 aa).

Residue 12–18 (GAAGQIG) coordinates NAD(+). Residues Arg93 and Arg99 each coordinate substrate. NAD(+)-binding positions include Asn106, Gln113, and 130-132 (VGN). Residues Asn132 and Arg163 each contribute to the substrate site. The active-site Proton acceptor is the His188.

This sequence belongs to the LDH/MDH superfamily. MDH type 2 family.

It catalyses the reaction (S)-malate + NAD(+) = oxaloacetate + NADH + H(+). In terms of biological role, catalyzes the reversible oxidation of malate to oxaloacetate. This Saccharopolyspora erythraea (strain ATCC 11635 / DSM 40517 / JCM 4748 / NBRC 13426 / NCIMB 8594 / NRRL 2338) protein is Malate dehydrogenase.